The primary structure comprises 344 residues: tRNA N6-adenosine threonylcarbamoyltransferase (344 aa).

Residues His-116 and His-120 each contribute to the Fe cation site. Residues 138-142 (LVSGG), Asp-171, Gly-184, Asp-188, and Asn-277 contribute to the substrate site. Asp-307 serves as a coordination point for Fe cation.

This sequence belongs to the KAE1 / TsaD family. The cofactor is Fe(2+).

Its subcellular location is the cytoplasm. The enzyme catalyses L-threonylcarbamoyladenylate + adenosine(37) in tRNA = N(6)-L-threonylcarbamoyladenosine(37) in tRNA + AMP + H(+). In terms of biological role, required for the formation of a threonylcarbamoyl group on adenosine at position 37 (t(6)A37) in tRNAs that read codons beginning with adenine. Is involved in the transfer of the threonylcarbamoyl moiety of threonylcarbamoyl-AMP (TC-AMP) to the N6 group of A37, together with TsaE and TsaB. TsaD likely plays a direct catalytic role in this reaction. This is tRNA N6-adenosine threonylcarbamoyltransferase from Latilactobacillus sakei subsp. sakei (strain 23K) (Lactobacillus sakei subsp. sakei).